The primary structure comprises 173 residues: Translation initiation factor IF-3 (173 aa).

It belongs to the IF-3 family. As to quaternary structure, monomer.

Its subcellular location is the cytoplasm. Its function is as follows. IF-3 binds to the 30S ribosomal subunit and shifts the equilibrium between 70S ribosomes and their 50S and 30S subunits in favor of the free subunits, thus enhancing the availability of 30S subunits on which protein synthesis initiation begins. This chain is Translation initiation factor IF-3, found in Aromatoleum aromaticum (strain DSM 19018 / LMG 30748 / EbN1) (Azoarcus sp. (strain EbN1)).